We begin with the raw amino-acid sequence, 245 residues long: Dehydrogenase/reductase SDR family member 6 (245 aa).

NAD(+) is bound by residues 16 to 18, aspartate 37, and aspartate 58; that span reads QGI. Arginine 144 provides a ligand contact to substrate. Tyrosine 147 acts as the Proton acceptor in catalysis. NAD(+)-binding positions include lysine 151 and 180 to 184; that span reads VDTPS. Residues arginine 188 and arginine 205 each coordinate substrate.

The protein belongs to the short-chain dehydrogenases/reductases (SDR) family. As to quaternary structure, homotetramer.

It is found in the cytoplasm. The enzyme catalyses cis-4-hydroxy-L-proline + NAD(+) = 4-oxo-L-proline + NADH + H(+). It catalyses the reaction (R)-3-hydroxybutanoate + NAD(+) = acetoacetate + NADH + H(+). It functions in the pathway amino-acid metabolism. Its pathway is siderophore biosynthesis. Functionally, NAD(H)-dependent dehydrogenase/reductase with a preference for cyclic substrates. Catalyzes stereoselective conversion of 4-oxo-L-proline to cis-4-hydroxy-L-proline, likely a detoxification mechanism for ketoprolines. Mediates the formation of 2,5-dihydroxybenzoate (2,5-DHBA), a siderophore that chelates free cytoplasmic iron, thereby regulating iron transport and homeostasis while protecting cells against free radical-induced oxidative stress. The iron-siderophore complex is imported into mitochondria, providing an iron source for mitochondrial metabolic processes in particular heme synthesis. May act as a 3-hydroxybutyrate dehydrogenase. This chain is Dehydrogenase/reductase SDR family member 6 (bdh2), found in Xenopus laevis (African clawed frog).